The following is a 2656-amino-acid chain: 1-phosphatidylinositol 3-phosphate 5-kinase (2656 aa).

Positions 24 to 159 (FGTDDSQKDF…NSTNNDTSSN (136 aa)) are disordered. 2 stretches are compositionally biased toward low complexity: residues 59 to 107 (NNNN…NNNN) and 124 to 159 (SNTT…TSSN). Residues 198-255 (DHSSAVCYECSEEFTTFKRRHHCRLCGQIFCWKCSQKTLTDGKGERVRVCNFCYRRYM) form an FYVE-type zinc finger. The Zn(2+) site is built by C204, C207, C220, C223, C228, C231, C247, and C250. Over residues 304-331 (NVSLGNSGDNSSFVQSPNNNFSQSPTFS) the composition is skewed to polar residues. Disordered regions lie at residues 304-383 (NVSL…NNQQ), 465-495 (DHHQ…SPIV), 517-570 (DNLD…SSSS), 618-657 (NNND…NTSF), 670-823 (TIGR…QQQP), 1115-1150 (SNSI…NNST), 1633-1659 (RSKR…QILI), 1710-1844 (VNNN…SSTP), 2031-2127 (QQQQ…SISP), 2179-2208 (NQQQ…SIIE), 2246-2304 (QQGD…SSNS), and 2617-2656 (NNNN…QINK). Residues 332 to 355 (QQQQQQQQQQQQQQQQQQQQQQQQ) are compositionally biased toward low complexity. Polar residues-rich tracts occupy residues 356–371 (TTGV…NSTL), 473–489 (SNSH…TPSG), and 542–557 (SHSS…TVST). 5 stretches are compositionally biased toward low complexity: residues 558–570 (GESN…SSSS), 618–637 (NNND…NNNN), 674–730 (NNNN…NLPN), 743–757 (QQQQ…QPQP), and 811–823 (PSSS…QQQP). 2 stretches are compositionally biased toward low complexity: residues 1639–1656 (QQQQ…PQPQ) and 1710–1746 (VNNN…NNNN). Coiled coils occupy residues 1741–1823 (NNNN…NNNN) and 2019–2061 (KRIS…QQEQ). Residues 1750 to 1798 (NKSENENENKNENKNENENENENKNENKNENENENKKENENQLEIKNEN) are compositionally biased toward basic and acidic residues. 4 stretches are compositionally biased toward low complexity: residues 1807-1833 (NNNN…IDNN), 2031-2061 (QQQQ…QQEQ), 2078-2107 (SPSS…SETN), and 2118-2127 (LSGSPISISP). Residues 2193–2202 (IDEKDDRNTE) show a composition bias toward basic and acidic residues. Low complexity-rich tracts occupy residues 2252–2283 (NNNN…NNNN) and 2618–2647 (NNNN…GNIN). The region spanning 2275-2596 (NNNNTNNNNE…RFRDAMWLYF (322 aa)) is the PIPK domain.

The protein resides in the endosome membrane. The protein localises to the early endosome membrane. It localises to the cytoplasmic vesicle. It is found in the phagosome membrane. Its subcellular location is the late endosome membrane. The catalysed reaction is a 1,2-diacyl-sn-glycero-3-phospho-(1D-myo-inositol-3-phosphate) + ATP = a 1,2-diacyl-sn-glycero-3-phospho-(1D-myo-inositol-3,5-bisphosphate) + ADP + H(+). It catalyses the reaction a 1,2-diacyl-sn-glycero-3-phospho-(1D-myo-inositol) + ATP = a 1,2-diacyl-sn-glycero-3-phospho-(1D-myo-inositol-5-phosphate) + ADP + H(+). The enzyme catalyses L-seryl-[protein] + ATP = O-phospho-L-seryl-[protein] + ADP + H(+). Functionally, dual specificity kinase part of the PI(3,5)P2 regulatory complex which regulates both the synthesis and turnover of phosphatidylinositol 3,5-bisphosphate (PtdIns(3,5)P2). Catalyzes the phosphorylation of phosphatidylinositol 3-phosphate on the fifth hydroxyl of the myo-inositol ring, to form phosphatidylinositol 3,5-bisphosphate. In Dictyostelium discoideum (Social amoeba), this protein is 1-phosphatidylinositol 3-phosphate 5-kinase (pip5k3).